A 400-amino-acid polypeptide reads, in one-letter code: MSKNRRLFTSESVTEGHPDKICDQISDSILDEILKKDPNARVACETSVTTGLVLVSGEITTSTYVDIPKTVRETIKEIGYTRAKYGFDAETCAVLTSIDEQSPDIAMGVDQALEAREGAMSDAEIEAIGAGDQGLMFGFACNETKELMPLPISLAHKLSRRLTEVRKEEILPYLRPDGKTQVTVEYDENNKPIRIDTIVISTQHHPEISLEQIQRNLKEHVINPVVPKELIDENTKYFINPTGRFVIGGPQGDAGLTGRKIIVDTYGGYARHGGGAFSGKDATKVDRSAAYAARYVAKNIVAAGLADSCEVQLAYAIGVAQPVSISIDTFGTGKASEETLIEVVRKNFDLRPAGIIKMLDLRRPIYKQTAAYGHFGRLDLDLPWERTDKADQLKKDALGE.

His17 contacts ATP. Residue Asp19 coordinates Mg(2+). Glu45 is a K(+) binding site. Residues Glu58 and Gln101 each coordinate L-methionine. The flexible loop stretch occupies residues 101-111; the sequence is QSPDIAMGVDQ. Residues 177–179, 244–245, Asp253, 259–260, Ala276, and Lys280 contribute to the ATP site; these read DGK, RF, and RK. Position 253 (Asp253) interacts with L-methionine. Lys284 lines the L-methionine pocket.

It belongs to the AdoMet synthase family. Homotetramer; dimer of dimers. Requires Mg(2+) as cofactor. K(+) is required as a cofactor.

It is found in the cytoplasm. The enzyme catalyses L-methionine + ATP + H2O = S-adenosyl-L-methionine + phosphate + diphosphate. Its pathway is amino-acid biosynthesis; S-adenosyl-L-methionine biosynthesis; S-adenosyl-L-methionine from L-methionine: step 1/1. Functionally, catalyzes the formation of S-adenosylmethionine (AdoMet) from methionine and ATP. The overall synthetic reaction is composed of two sequential steps, AdoMet formation and the subsequent tripolyphosphate hydrolysis which occurs prior to release of AdoMet from the enzyme. The protein is S-adenosylmethionine synthase of Bacillus licheniformis (strain ATCC 14580 / DSM 13 / JCM 2505 / CCUG 7422 / NBRC 12200 / NCIMB 9375 / NCTC 10341 / NRRL NRS-1264 / Gibson 46).